Reading from the N-terminus, the 468-residue chain is RUS family member 1 (468 aa).

N-acetylalanine is present on alanine 2. The residue at position 49 (threonine 49) is a Phosphothreonine. The helical transmembrane segment at 247–267 threads the bilayer; sequence LLMLPLVSGCPGFSLGCFFFL.

It belongs to the RUS1 family.

It localises to the membrane. In Pongo abelii (Sumatran orangutan), this protein is RUS family member 1 (Rusf1).